Reading from the N-terminus, the 400-residue chain is Centrosomal protein CEP57L1 (400 aa).

The residue at position 45 (serine 45) is a Phosphoserine. Coiled coils occupy residues 47–111 and 138–213; these read NNQA…KKDI and NVER…QDRA. Disordered stretches follow at residues 222–261 and 314–400; these read REPPQQRDHKFRTPTFERKKPFRTTSQARANPQSSGEPVS and MESK…KWEQ. Positions 244–258 are enriched in polar residues; the sequence is RTTSQARANPQSSGE. The stretch at 261-345 forms a coiled coil; sequence SICDSLSELL…EKIENSRINE (85 aa). Composition is skewed to basic and acidic residues over residues 314 to 342 and 391 to 400; these read MESKGDQISKLKKHQDSVRKLQEKIENSR and LRRDDIKWEQ.

It belongs to the translokin family.

Its subcellular location is the cytoplasm. It is found in the cytoskeleton. The protein resides in the microtubule organizing center. It localises to the centrosome. Functionally, centrosomal protein which may be required for microtubule attachment to centrosomes. This Mus musculus (Mouse) protein is Centrosomal protein CEP57L1 (Cep57l1).